Reading from the N-terminus, the 1279-residue chain is Sterol regulatory element-binding protein cleavage-activating protein (1279 aa).

The Cytoplasmic portion of the chain corresponds to 1-18 (MTLTERLREKISQAFYNH). The chain crosses the membrane as a helical span at residues 19–39 (GLLCASYPIPIILFTGLCILA). The Lumenal segment spans residues 40–279 (CCYPLLKLPL…SLVHVHFKEE (240 aa)). The tract at residues 46–284 (KLPLPGTGPV…HFKEEIGIAE (239 aa)) is loop-1. A disordered region spans residues 60-81 (PVKDYSPPPSASDHKPGEPSEQ). An N-linked (GlcNAc...) asparagine glycan is attached at Asn-263. The helical transmembrane segment at 280–300 (IGIAELIPLVTTYIILFAYIY) threads the bilayer. The 159-residue stretch at 284–442 (ELIPLVTTYI…MPFFTTVLSI (159 aa)) folds into the SSD domain. Topologically, residues 301–312 (FSTRKIDMVKSK) are cytoplasmic. The helical transmembrane segment at 313 to 333 (WGLALAAVVTVLSSLLMSVGL) threads the bilayer. Residues 334 to 344 (CTLFGLTPTLN) lie on the Lumenal side of the membrane. Residues 345–365 (GGEIFPYLVVVIGLENVLVLT) form a helical membrane-spanning segment. At 366-401 (KSVVSTPVDLEVKLRIAQGLSSESWSIMKNMATELG) the chain is on the cytoplasmic side. A helical membrane pass occupies residues 402 to 422 (IILIGYFTLVPAIQEFCLFAV). A topological domain (lumenal) is located at residue Val-423. The chain crosses the membrane as a helical span at residues 424 to 444 (GLVSDFFLQMPFFTTVLSIDI). Residues 445–518 (RRMELADLNK…FLARTRLAQR (74 aa)) are Cytoplasmic-facing. Positions 447–452 (MELADL) match the ER export signal motif. Residues Lys-454 and Lys-466 each participate in a glycyl lysine isopeptide (Lys-Gly) (interchain with G-Cter in ubiquitin) cross-link. A helical membrane pass occupies residues 519–539 (LIMAGTVVWIGILAYTDPAGL). The segment at 535-710 (DPAGLRTYLA…QAHRDVTLYK (176 aa)) is loop-7. The Lumenal portion of the chain corresponds to 540–707 (RTYLAAQVTE…GVAQAHRDVT (168 aa)). Positions 588–617 (LENQTLPGEPPEPGGQAEGVHDSPAPEVTW) are disordered. N-linked (GlcNAc...) asparagine glycans are attached at residues Asn-590 and Asn-641. Positions 668–696 (EGRHPQDSRSAWSPPQPAQGGLWDAGPKG) are disordered. A helical membrane pass occupies residues 708–728 (LYKVAALGLATGILLVLLLCL). Over 729 to 1279 (YRVLCPRNYG…YVPSVLEKLD (551 aa)) the chain is Cytoplasmic. The segment at 730–1279 (RVLCPRNYGQ…YVPSVLEKLD (550 aa)) is interaction with SREBF2. The stretch at 770-810 (VLRGHLMDIECLASDGMLLVSCCLAGHVCVWDAQTGDCLTR) is one WD 1 repeat. 4 positions are modified to phosphoserine: Ser-821, Ser-837, Ser-843, and Ser-850. 3 disordered regions span residues 834-868 (ERLSDGGKASPEEPGDSPPLRHRPRGTPLPSLFGD), 883-903 (HPRLPELDHPEPRHRSGCRRT), and 925-959 (VPMHTPAPRPPSPGPTPPQTPEDEGSFPPEKGSPS). The segment covering 885-896 (RLPELDHPEPRH) has biased composition (basic and acidic residues). The segment covering 929-944 (TPAPRPPSPGPTPPQT) has biased composition (pro residues). Phosphoserine is present on Ser-936. 2 WD repeats span residues 952–1002 (PPEK…LRCS) and 1005–1042 (EVASGITALVFLDKRIVAARLNGSLDFFSLETHTALSP). Position 1051 is an omega-N-methylarginine (Arg-1051). WD repeat units lie at residues 1077–1114 (AHQKPITALKAAAGRLVTGSQDHTLRVFRLEDSCCLFT), 1117–1155 (GHSGAITTVYIDQTMVLASGGQDGAICLWDVLTGSRVSH), 1158–1195 (AHRGDVTSLTCTTSCVISSGLDDLISIWDRSTGIKLYS), and 1197–1235 (QQDLGCGASLGVISDNLLVTGGQGCVSFWDLNYGDLLQT).

The protein belongs to the WD repeat SCAP family. As to quaternary structure, membrane region forms a homotetramer. Component of the SCAP-SREBP complex (composed of SCAP and SREBF1/SREBP1 or SREBF2/SREBP2); interacts with SREBF1/SREBP1 or SREBF2/SREBP2 through its C-terminal cytoplasmic domain. Forms a ternary complex with INSIG1 or INSIG2 through its transmembrane domains at high sterol concentrations. Interacts with PAQR3; the interaction anchors the SCAP-SREBP complex to the Golgi apparatus in low cholesterol conditions. Interacts with the SEC23-SEC24 complex in a SAR1-GTP-dependent manner through an ER export signal in its third cytoplasmic loop. Interacts with RNF139; the interaction inhibits the interaction of SCAP with SEC24B and hampering the ER to Golgi transport of the SCAP-SREBP complex. Interacts with SPRING1. Post-translationally, ubiquitinated at Lys-454 and Lys-466. RNF145 triggers ubiquitination of SCAP, likely inhibiting SCAP-SREBP complex transport to the Golgi apparatus and the subsequent processing/maturation of SREBF2/SREBP2. Widely expressed with higher levels in lung, kidney, gut, brain and adipose tissue. In terms of tissue distribution, expressed in liver and muscle. Isoform 3 expressed in testis. As to expression, expressed in testis.

Its subcellular location is the endoplasmic reticulum membrane. The protein localises to the golgi apparatus membrane. The protein resides in the cytoplasmic vesicle. It localises to the COPII-coated vesicle membrane. Functionally, escort protein required for cholesterol as well as lipid homeostasis. Regulates export of the SCAP-SREBP complex from the endoplasmic reticulum to the Golgi upon low cholesterol, thereby regulating the processing of sterol regulatory element-binding proteins (SREBPs) SREBF1/SREBP1 and SREBF2/SREBP2. At high sterol concentrations, formation of a ternary complex with INSIG (INSIG1 or INSIG2) leads to mask the ER export signal in SCAP, promoting retention of the complex in the endoplasmic reticulum. Low sterol concentrations trigger release of INSIG, a conformational change in the SSD domain of SCAP, unmasking of the ER export signal, promoting recruitment into COPII-coated vesicles and transport of the SCAP-SREBP to the Golgi: in the Golgi, SREBPs are then processed, releasing the transcription factor fragment of SREBPs from the membrane, its import into the nucleus and up-regulation of LDLR, INSIG1 and the mevalonate pathway. Binds cholesterol via its SSD domain. The chain is Sterol regulatory element-binding protein cleavage-activating protein from Sus scrofa (Pig).